We begin with the raw amino-acid sequence, 364 residues long: UDP-N-acetylglucosamine--N-acetylmuramyl-(pentapeptide) pyrophosphoryl-undecaprenol N-acetylglucosamine transferase (364 aa).

Residues 10-12 (TGG), Asn-123, Ser-198, Ile-251, and Gln-296 each bind UDP-N-acetyl-alpha-D-glucosamine.

Belongs to the glycosyltransferase 28 family. MurG subfamily.

Its subcellular location is the cell membrane. It catalyses the reaction di-trans,octa-cis-undecaprenyl diphospho-N-acetyl-alpha-D-muramoyl-L-alanyl-D-glutamyl-meso-2,6-diaminopimeloyl-D-alanyl-D-alanine + UDP-N-acetyl-alpha-D-glucosamine = di-trans,octa-cis-undecaprenyl diphospho-[N-acetyl-alpha-D-glucosaminyl-(1-&gt;4)]-N-acetyl-alpha-D-muramoyl-L-alanyl-D-glutamyl-meso-2,6-diaminopimeloyl-D-alanyl-D-alanine + UDP + H(+). The protein operates within cell wall biogenesis; peptidoglycan biosynthesis. Functionally, cell wall formation. Catalyzes the transfer of a GlcNAc subunit on undecaprenyl-pyrophosphoryl-MurNAc-pentapeptide (lipid intermediate I) to form undecaprenyl-pyrophosphoryl-MurNAc-(pentapeptide)GlcNAc (lipid intermediate II). The chain is UDP-N-acetylglucosamine--N-acetylmuramyl-(pentapeptide) pyrophosphoryl-undecaprenol N-acetylglucosamine transferase from Exiguobacterium sibiricum (strain DSM 17290 / CCUG 55495 / CIP 109462 / JCM 13490 / 255-15).